A 573-amino-acid chain; its full sequence is Zinc finger protein 10 (573 aa).

A KRAB domain is found at 14–85 (VTFKDVFVDF…EREIHQETHP (72 aa)). The C2H2-type 1; atypical zinc-finger motif lies at 206–232 (DSCASNSNECGQTFCQNIHLIQFARTH). C2H2-type zinc fingers lie at residues 265-287 (YECKECGKFFSWRSNLTRHQLIH), 293-315 (YECKECGKSFSRSSHLIGHQKTH), 321-343 (YECKECGKSFSWFSHLVTHQRTH), 349-371 (YTCNQCGKSFVHSSRLIRHQRTH), 377-399 (YECPECGKSFRQSTHLILHQRTH), 405-427 (YECNECGKSYSQRSHLVVHHRIH), 433-455 (FECKDCGKCFSRSSHLYSHQRTH), 461-483 (YECHDCGKSFSQSSALIVHQRIH), and 489-511 (YECCQCGKAFIRKNDLIKHQRIH). Residues 517–539 (YKCNQCGIIFSQNSPFIVHQIAH) form a C2H2-type 11; atypical zinc finger.

This sequence belongs to the krueppel C2H2-type zinc-finger protein family. As to quaternary structure, interacts (via the KRAB domain) with TRIM28 (via the RBCC domain).

It is found in the nucleus. Its function is as follows. May be involved in transcriptional regulation. The chain is Zinc finger protein 10 (ZNF10) from Homo sapiens (Human).